The chain runs to 1859 residues: Y' element ATP-dependent helicase protein 1 copy 6 (1859 aa).

Residues 861–1038 (EIYMADTPSV…LQRIGLTGLA (178 aa)) form the Helicase ATP-binding domain. 874-881 (APPGYGKT) serves as a coordination point for ATP. The region spanning 1095 to 1244 (KLLLALFEIE…EFYGLESKKG (150 aa)) is the Helicase C-terminal domain. Positions 1318-1461 (ANASTNATTN…ATTTESTNAS (144 aa)) are enriched in low complexity. The disordered stretch occupies residues 1318–1485 (ANASTNATTN…RFHPVTDINK (168 aa)). Over residues 1462–1485 (AKEDANKDGNAEDNRFHPVTDINK) the composition is skewed to basic and acidic residues.

It belongs to the helicase family. Yeast subtelomeric Y' repeat subfamily.

Catalyzes DNA unwinding and is involved in telomerase-independent telomere maintenance. In Saccharomyces cerevisiae (strain ATCC 204508 / S288c) (Baker's yeast), this protein is Y' element ATP-dependent helicase protein 1 copy 6 (YRF1-6).